We begin with the raw amino-acid sequence, 4924 residues long: MKNSNEEDAFSTQISQLGPMRPSSDAPYHVLSLPFSHPYSAFLDAWSWLFCGITGGEVSFFFFPVSDDVIPNTNPKNCQCYLYHSTNSQLEPLEVFHLHKLHSAVFTSRRDPSFADDLFESSKPCLNQLLSYFSDITAFRSMDVVADIAFVCSPNFLTLKWNSSLFDDDLARLLFFMINSKITNYDLPFSILNSPCSDLCLNSSSLANYLHGCFYHNTLSHPYQDALKFIYEIGDDLEDTFRSFSFLELHSLAIKLSKLVTCKNEVVPIMVSHSPALFVGILAILYSGNAYCPIDVETRTERVHFISKDVDASFAIVSEEFVNRFPNNTIILKVPEYNESMEIKVDDEIPPFPFPESLDSVAYVLYTSGSTGNPKGVAISHRAATNSIKSHGYLYPMFGLERGDAWLQFANVTFDVSVFEIFGNWNNGLTLVTSKRQNLIGNLEYLIYDYKIAALELTPTVANVISLDENKELFTSVRMLITIGELLTNRIIDFWGERLVNAYGPTEAAIHVTLNPSKALTTVYLVGVPLQSATICVVSLPTEDSQPHVLHEGFLGEVCIAGPQLSSGYINRPEINAKAFVEVQYNEQTLSIYRTGDLGRIINGKLYIFGRIAGDMQIKIRGRRIEIGEIESKLAPSVDSLAIEKIGDNLVAFYVGDEMKLRKHAESHLASWMCPTKYVGLPGFPRLASGKTDRKALKIQFSASDKHSTDFSSFNQSELLVANVLHEICEKRFNSVVSISRFSSIFDLGLDSLDIVYFVRKIRSLGFEANPSIVLTSKVVFKIAESLILLKPNEVQSKNNFLNKCTPLQKGMLYESFSNNGNLYFNHTVFKIAASPEKVKLAWEKLLDTHTILSNGFALDENEGFTRFILEKKPPLYSYSKNCLECIQKHFTTKEFDEQFLNSGPLDAAVIYDSSNCYLSIVWHHALYDGWSIDIIMQQLFMLIHDRRLTIVPQFEDYVQELESLRRLNYKNCISFWKKYLKDFKFKSLSYQREKMGVVELSSNISLLSVENICKQLQTTPLSFFLTAWSTVLSSYLKTNDFLVGTVVSGRVNSLLPNVDYVIGPCMQTLPVRIKLDDELSYKNLCQNLFKELSFVLKHSVMAISDFQEELLVSNLFESILIYQQSGIPSVDESFISLIHSTDHVEQPLLIEIEKNKGYKFKLTGYLSSELLNNLLNDFDKILNFILYNIESKIQTHASFNVTITEHNHVESKARTGFSKREEKLVRSCLSKILGNTVLSADVFENLQNYGFDSLCAMRFFSLLRKSSGIGNLKIPNMKSNPTIASLCELLVLPTETLSADNEITFYEVSDIQHEANLDIESFQYFPCTPMQQALLASSEKNGVEYYYNKYLFETGKSSQEEIYLLFKTLLNNLPILRTCFFVTRSKKYPYCQVVLNEPNFYFQVLPYKGESLSKYNLAEIPLLDSKKVPIQIFFLQGENKNYVLFCIHHVLYDAWAFQLIMDDINHLLRKENPKGSQSMLKFISYLHRYNKNVDLEIWSKIFLGFKPSKFPELCKDINPEQRTYKCNLSISLSQIDDLCNGFSFTTSTFLQCCWAKTLSFLLNSRDICFGNIISGRDVPVDEVVSLVAPTFNSFPLRVLLDSKLSFAEVCGQLQRLKETLQEHQMTSVQSICKSLTVKSLFDTVFIIQPQLLSDRTGPWKLLNESSSMDMRFIIELLLGSDDSPLTLVGTGTGKSGKLVCNLYKTILKHYVHYGLSTSVPLYTSLEKHNLISRSPSSPPPIHTNFDTNADIITLFEKEANEHPSSIALHFVYNVDKENIYSYKFFSEYSIKASYWLHSIGIKKNDVVAVFIDKSLDYYSLMLGVLRIGAFFFPLEHCSSLNFAKENLLRTNVKLLIVDKFLPFEDVNQVEIDKFRQVVDKLPTVEIPNESRSSAFIFPSYELAEGLTMMESSSFMDSIISFIDSTCFPSSSRWFQYAPSSTACQMFDCFMCWFFGCTLISGPQLFLKNNLKPLLLATHASHLITTSSIAASLKGEDIPSIQRLYCYEGPINNYMIKSWGSRLSYIYAFKPLICSCVPATEYLESNIMMVGIPLKGLIFAVVNSDTNTLAPIGSSGELCIASVKKSGNTMMDSQRVFTFENRSYYRTGDIVRILAGGEFEYIKKKSFIFIDSMPLDIEGKINVDKLRDLLNDDNYIFKVDNDEFPKNDNILDGFQEKVILTISDFASIPFEKLSLNTKLSTIGIDSISAIQLSKDLREIFHLRISALDILNSSTINSLIRKLKRRRTESHTRNDKIHESIDQFFKDIRKQILIPQTLCDKIEQILPCLASQCSMLSRFYTNGGKDYLNYSVFHLQKYNDPLLLRSSWENVISNVSILRTKFQTTKHKRSPFCQVTYSKVDIPWSMELHAASVEKVLNEYLELQRRDLLQGKNVLPYSLIFVRTFSQETFLIIIMHHALYDESSLRKILGLVEKSLNSPIGKFNHEPIVRQIELLKANYEEAKAFWIKQLLSFQPTNFPSLTACRIDNEDRMLTKKPCALNYTNLTKWCNAHDVTLQVLGQLVWAKILASYCAENYAVFGTVLSGKSVLTDVDDNIFPTVTTIPCVVKLQGTVEDCLRQLQKFNLDANKFQFTSLLDIKKWLNLGPSEKLFSSLFSIYVDNDIPLKLFNDECKAQGFIEFPVALEMRFSESTSELTLNSAVNYIPQAHASLILDQFNAILTTIFNNPLQQIEILENSLPTQLLSIKPAIVGDYPTEIKYLHQFVEYFAQKSPNSCALEFALDINQDSVQLIRLTYSELNERANKLAHNLKSYGFRVGSIIAVYFDKCIEAFISMLAILKAGCCFLALDVSAPTERIRYIVTDSTAVLVMSTGELYTKLLNASINVTILDASDPGNYSNNIENPYTKDFEDSNLAYVLYTSGSTGKPKGCCLTHHNVVQCMLAFQDQFAGEWDTNSRFLAFASFHFDVSVLEQYFSWSTGITLVAAPQSLILQDLPTAISALKITHVDLTPSLASILTPKTAPLLRVFITGGEQIKQELLNIWGDTRVLYNFWGPTELTIGASAFRKVPKNAKVSNIGPPFPNCSTYILSKETKVPVLLGGLGEICMGGNQVAKGYLNLPEQTDAKFYFDRRFNDRIYHTGDLGRLLKDNNSLEFCGRTDDQIKLRGQRIEIGEINAVIKSSSEKILGVYTLAVVHPVLRKQQLVAFIHVKGISASHLIVHDHKDPSLIGFINSACKASLAKYMVPSFYVFISSVPLTPTNKFDKKKVIEEFSRLSLGQLSSFAPAREENDNEGSNVVEPKLLKIIADFSDVKVTDISPQTSVFELGLDSISAVALSGLLRKSGYDNANPSLILTSSTISNLGFALNTQTNEELEDSIKVNSIIKLPSCSQFPFHQYIELINPCLPLVEGLLFELERSNNENYYNSFFFLFEKREQADQFINNFKLLRKQYEVLRSSFLKSDGEYFQVVWKSDFIAEVDVLNNDSLIKTVRYSLKCEKGFFLVTVTLFHGIYDGWSLDLLLNDLARLCSRKTLAPRPRYSKIVRQLLINTSLKKDTKEYWLNLFRSKNIYVPIFQGKLDMAITLGHKLSISSAKLSTICRSVLKASVNSALLTSWICFLNSIGAINCVGIVVSGRSEISMDCLEVMGPLFNTIPFPLFLEKDESFDCLVRRCQLTLASMIPYHQTSLREIKKWLRRSELFNVLFTYNLHPSVIKQCEFPWSFSSESTDTGYPLALEIEEDVDGTMNLHLSSNFKYIGQTEIIGLLDSYDCYLSSLLETSNAKISSRPNVLMPNQPEVKQYIPNVWNDVLKKLITILSPKVIITKLDFERDTFVHEFGIDSIDLIWLASKVSEAGIGKLDIGLLMEKPTFYRILQLLCETSANHSTSLKHEFGTLNTLLSKYLTDQDAEDCYPATPIQSGLLLETMNQKNLYQNDVLFSLDAEISLEKLQNSWKRLCQKNAILRTHFAISEDSSEPMVIQIVDKFEARSCLNQIKILPSRFTNIEDTLRFLRHDEEAKRFLDPFKNPPYYVQFFEIGAKNYMFVQMHHSLYDGWSLSLMYDELMQLYRDEQGNSRKPFKDYIIQLYSLKYDYDFWFKYFENLSIPKPLPFLSNNGKFMSSMMSTVSLPSVRLACQLYGVSIQSLVFFTWGYYIASVLNCPDIVFHTVLSGRTYIEGAETVMGPCMNTIPVRIKFEGALQTLKKTSRMLINLAKQQHTPLSWIYKTYGNVAAIPMESILVYQHLPDSSQSETFLNVVTDNSAVDYPIAIQFEIQGDTLNWLTSLDLARVDGDVANQLLQTIDKIFSNLTKGSFEKLTFNFSNFVKYRQYQINLKDFRENLLLTEEAISDCDLLIIDERVLVVFILFPEPDAKFPYLVLNEEIIRMLKSYIKKFRLTLSSAMVPDILVPVSYLPRSLDHSENEGKLLNIYNSISADNLKILSAVHEIHLNETEKILLEGFSKIICLPQDSVDISNNFFQLGMDSIRSIHLCSYLRNKGLNVSVSDILQHSSIEKLAHYLQYEKKESSSSFDIASFQLDEYLNTLPSNIPINLVQKILPCSAGQMYALNAWYNTEKKKYFHTFFYTTEEKIELLKLKLAWAKLVKSSDILRTTFIRSSSPCYPLLQIVLKSFECPWEHYITDNLHDTCLKIQKRELVTNTTLQEVPLRIATIETSGKFVFCLTIHHALYDGWSLDIMINYLSKMYYDDSLTIVQQNSQLFLSTVLDPAVGLSRKKFWNNYLTNYKPYTFLEKPSASQEITLFFPKLFSLDTVYSSVRSRGLTVQSVSFAVFARLLANEVKQEDVVFGIYVSGRTLDVDNIDELLFPTFNVVPLRVTDTFRPLGEIALEIQSFLNEISGNLQYISLLDLPVHGMMDIAVNFLSTGDNNEPSKVFSVYPLKLNNAELKINEVETTIDGCEILFGNKPKLDFELAIRDGYLEIGLFCQSSIFSKREASVFINNFVTIIKEIEL.

4 Carrier domains span residues 715-791, 2172-2246, 3254-3328, and 4402-4478; these read NQSE…ILLK, DGFQ…KRRR, NVVE…NTQT, and IHLN…QYEK. 4 positions are modified to O-(pantetheine 4'-phosphoryl)serine: Ser-752, Ser-2206, Ser-3288, and Ser-4439.

Belongs to the ATP-dependent AMP-binding enzyme family.

Its subcellular location is the cytoplasm. Functionally, involved in intracellular and extracellular ferrichrome siderophore biosynthesis. This chain is Hydroxamate-type ferrichrome siderophore peptide synthetase (sib1), found in Schizosaccharomyces pombe (strain 972 / ATCC 24843) (Fission yeast).